A 570-amino-acid chain; its full sequence is Hemagglutinin-neuraminidase (570 aa).

The Intravirion portion of the chain corresponds to 1 to 26; that stretch reads MNRAVCQVALENDEREAKNTWRLVFR. Residues 27–48 traverse the membrane as a helical segment; sequence IAILLLTVMTLAISAAALAYSM. The Virion surface segment spans residues 49 to 570; sequence EASTPGDLVS…LVEILKDDGV (522 aa). Asn119 carries N-linked (GlcNAc...) asparagine; by host glycosylation. The tract at residues 124-152 is important for interaction with fusion/F protein; that stretch reads GAPVHDPDYIGGIGKELIVDDTSDVTSFY. Disulfide bonds link Cys172-Cys195, Cys185-Cys246, and Cys237-Cys250. Residues 233 to 238 form an involved in neuraminidase activity region; it reads NRKSCS. N-linked (GlcNAc...) asparagine; by host glycosylation is found at Asn340 and Asn432. Intrachain disulfides connect Cys343–Cys460 and Cys454–Cys464. Residues Asn480, Asn507, and Asn537 are each glycosylated (N-linked (GlcNAc...) asparagine; by host). The cysteines at positions 530 and 541 are disulfide-linked.

Belongs to the paramyxoviruses hemagglutinin-neuraminidase family. As to quaternary structure, homotetramer; composed of disulfide-linked homodimers. Interacts with F protein trimer. Interacts with host CG-1B; this interaction inhibits viral adsorption and replication rather than internalization.

Its subcellular location is the virion membrane. The protein resides in the host cell membrane. The catalysed reaction is Hydrolysis of alpha-(2-&gt;3)-, alpha-(2-&gt;6)-, alpha-(2-&gt;8)- glycosidic linkages of terminal sialic acid residues in oligosaccharides, glycoproteins, glycolipids, colominic acid and synthetic substrates.. Its function is as follows. Mediates the viral entry into the host cell together with fusion/F protein. Attaches the virus to sialic acid-containing cell receptors and thereby initiates infection. Binding of HN protein to the receptor induces a conformational change that allows the F protein to trigger virion/cell membranes fusion. Neuraminidase activity ensures the efficient spread of the virus by dissociating the mature virions from the neuraminic acid containing glycoproteins. The chain is Hemagglutinin-neuraminidase (HN) from Gallus gallus (Chicken).